The sequence spans 1529 residues: DNA (cytosine-5)-methyltransferase 1B (1529 aa).

2 disordered regions span residues 1-56 and 674-706; these read MVKS…RAAC and DDELEENEDEDAEEEAQIEEENVSKTPPSTRSR. The span at 21–35 shows a compositional bias: basic and acidic residues; that stretch reads QKKDEDTTDKGKLDE. Acidic residues predominate over residues 674-694; sequence DDELEENEDEDAEEEAQIEEE. The span at 697–706 shows a compositional bias: polar residues; the sequence is SKTPPSTRSR. BAH domains lie at 741–873 and 910–1049; these read LRIN…FSLP and ITYN…KQLP. Residues 1093 to 1527 form the SAM-dependent MTase C5-type domain; that stretch reads LATLDIFAGC…RKLKEAVDAK (435 aa). The active site involves Cys-1198.

The protein belongs to the class I-like SAM-binding methyltransferase superfamily. C5-methyltransferase family. Expressed in roots and inflorescences. Expressed in roots, panicles, anthers, pistils, endosperm and imbibed embryos. Expressed in tissues containing actively replicating and dividing cells, such as shoot and root meristems.

The protein resides in the nucleus. It catalyses the reaction a 2'-deoxycytidine in DNA + S-adenosyl-L-methionine = a 5-methyl-2'-deoxycytidine in DNA + S-adenosyl-L-homocysteine + H(+). Major CG methylase that methylates chromatin CpG residues and maintains DNA methylation. Plays a major role in genomic imprinting, regulation of embryogenesis and seed viability. Maintains DNA methylation at the FIE1 gene locus in the embryo. The protein is DNA (cytosine-5)-methyltransferase 1B (MET1B) of Oryza sativa subsp. japonica (Rice).